The chain runs to 566 residues: Insulinoma-associated protein 2 (566 aa).

Residues 1–20 are SNAG domain; that stretch reads MPRGFLVKRTKRTGGLYRVR. The tract at residues 32 to 117 is disordered; it reads QGAPPFLEEA…PSPSPAKPAG (86 aa). Residues 103 to 113 show a composition bias toward pro residues; it reads GPSPSPSPSPA. The segment at 263–283 adopts a C2H2-type 1; atypical zinc-finger fold; that stretch reads FICQLCKEQYADPFALAQHRC. The segment at 291–313 adopts a C2H2-type 2 zinc-finger fold; the sequence is YRCPECDKVFSCPANLASHRRWH. A disordered region spans residues 310–418; the sequence is RRWHKPRPAA…RRVPVPGSTS (109 aa). Residues 318-348 show a composition bias toward low complexity; the sequence is AAANAATVSSADGKPPSSSSSSSRDSGAIAS. The segment covering 352 to 369 has biased composition (basic and acidic residues); it reads EGKENSRIERTADQHPQA. 3 C2H2-type zinc fingers span residues 426–448, 470–492, and 525–548; these read FVCP…LSTH, FACP…RLWH, and FSCK…NKCH.

In terms of tissue distribution, expressed in heart, liver, skeletal muscle, kidney and pancreas, and, to a lesser extent, in brain, lung and spleen. In the pancreas, expressed in islet cells, including insulin- and glucagon-producing alpha- and beta-cells, but not in acinar cells (at protein level). Detected in adrenal glands, particularly in the deeper layer of the cortex (at protein level).

Its subcellular location is the cytoplasm. It is found in the nucleus. May function as a growth suppressor or tumor suppressor in liver cells and in certain neurons. In Homo sapiens (Human), this protein is Insulinoma-associated protein 2 (INSM2).